Reading from the N-terminus, the 200-residue chain is MSSLKGKRIGFGLTGSHCTYEAVFPQIEELVNEGAEVRPVVTFNVKSTNTRFGEGAEWVKKIEDLTGYEAIDSIVKAEPLGPKLPLDCMVIAPLTGNSMSKLANAMTDSPVLMAAKATIRNNRPVVLGISTNDALGLNGTNLMRLMSTKNIFFIPFGQDDPFKKPNSMVAKMDLLPQTIEKALMHQQLQPILVENYQGND.

As to quaternary structure, dipicolinate synthase likely consists of DpaA and DpaB, since both proteins are required for DPA synthesis.

It catalyses the reaction (S)-2,3-dihydrodipicolinate + NADP(+) = dipicolinate + NADPH + H(+). Its function is as follows. Together with DpaA, catalyzes the conversion of dihydrodipicolinate to dipicolinate (DPA), which constitutes up to 10% of the dry weight of the spore. This chain is Dipicolinate synthase subunit B (dpaB), found in Bacillus subtilis (strain 168).